Here is a 277-residue protein sequence, read N- to C-terminus: Thiazole synthase (277 aa).

Catalysis depends on lysine 119, which acts as the Schiff-base intermediate with DXP. 1-deoxy-D-xylulose 5-phosphate-binding positions include glycine 180, 206–207, and 228–229; these read AG and NT.

The protein belongs to the ThiG family. In terms of assembly, homotetramer. Forms heterodimers with either ThiH or ThiS.

It is found in the plastid. It localises to the chloroplast. The enzyme catalyses [ThiS sulfur-carrier protein]-C-terminal-Gly-aminoethanethioate + 2-iminoacetate + 1-deoxy-D-xylulose 5-phosphate = [ThiS sulfur-carrier protein]-C-terminal Gly-Gly + 2-[(2R,5Z)-2-carboxy-4-methylthiazol-5(2H)-ylidene]ethyl phosphate + 2 H2O + H(+). It functions in the pathway cofactor biosynthesis; thiamine diphosphate biosynthesis. Functionally, catalyzes the rearrangement of 1-deoxy-D-xylulose 5-phosphate (DXP) to produce the thiazole phosphate moiety of thiamine. Sulfur is provided by the thiocarboxylate moiety of the carrier protein ThiS. In vitro, sulfur can be provided by H(2)S. The chain is Thiazole synthase from Pyropia yezoensis (Susabi-nori).